We begin with the raw amino-acid sequence, 529 residues long: Bifunctional purine biosynthesis protein PurH (529 aa).

The region spanning 1–148 (MQQRRPVRRA…KNHKDVAIVV (148 aa)) is the MGS-like domain. The residue at position 287 (K287) is an N6-acetyllysine.

It belongs to the PurH family.

It catalyses the reaction (6R)-10-formyltetrahydrofolate + 5-amino-1-(5-phospho-beta-D-ribosyl)imidazole-4-carboxamide = 5-formamido-1-(5-phospho-D-ribosyl)imidazole-4-carboxamide + (6S)-5,6,7,8-tetrahydrofolate. The enzyme catalyses IMP + H2O = 5-formamido-1-(5-phospho-D-ribosyl)imidazole-4-carboxamide. The protein operates within purine metabolism; IMP biosynthesis via de novo pathway; 5-formamido-1-(5-phospho-D-ribosyl)imidazole-4-carboxamide from 5-amino-1-(5-phospho-D-ribosyl)imidazole-4-carboxamide (10-formyl THF route): step 1/1. It participates in purine metabolism; IMP biosynthesis via de novo pathway; IMP from 5-formamido-1-(5-phospho-D-ribosyl)imidazole-4-carboxamide: step 1/1. This chain is Bifunctional purine biosynthesis protein PurH, found in Escherichia coli O8 (strain IAI1).